Here is a 339-residue protein sequence, read N- to C-terminus: DNA-directed RNA polymerase subunit alpha (339 aa).

Residues 1–233 (MVREEVAGST…DLFLPFLHAE (233 aa)) form an alpha N-terminal domain (alpha-NTD) region. The interval 266–339 (GIPLNCIFID…MDLLKNKLSF (74 aa)) is alpha C-terminal domain (alpha-CTD).

The protein belongs to the RNA polymerase alpha chain family. In terms of assembly, in plastids the minimal PEP RNA polymerase catalytic core is composed of four subunits: alpha, beta, beta', and beta''. When a (nuclear-encoded) sigma factor is associated with the core the holoenzyme is formed, which can initiate transcription.

It is found in the plastid. It localises to the chloroplast. It catalyses the reaction RNA(n) + a ribonucleoside 5'-triphosphate = RNA(n+1) + diphosphate. In terms of biological role, DNA-dependent RNA polymerase catalyzes the transcription of DNA into RNA using the four ribonucleoside triphosphates as substrates. This is DNA-directed RNA polymerase subunit alpha from Agrostis stolonifera (Creeping bentgrass).